The primary structure comprises 586 residues: FAD-linked oxidoreductase orf1 (586 aa).

An N-terminal signal peptide occupies residues 1-17 (MKSFATTVLLVTPGIYA). Residues asparagine 29, asparagine 51, asparagine 79, asparagine 110, asparagine 146, asparagine 188, asparagine 314, asparagine 321, asparagine 358, asparagine 402, asparagine 434, and asparagine 461 are each glycosylated (N-linked (GlcNAc...) asparagine). Residues 124–303 (TLGNYVSYAI…LSMTAKVHPD (180 aa)) form the FAD-binding PCMH-type domain.

Belongs to the oxygen-dependent FAD-linked oxidoreductase family.

The enzyme catalyses betaenone C = betaenone A. It functions in the pathway mycotoxin biosynthesis. Functionally, FAD-linked oxidoreductase; part of the gene cluster that mediates the biosynthesis of betaenones, phytotoxic polyketides involved in leaf spot disease in sugar beets. The first step of the pathway is the synthesis of dehydroprobetaenone I by the polyketide synthase bet1 and the enoyl reductase bet3 via condensation of one acetyl-CoA starter unit with 7 malonyl-CoA units and 5 methylations. The C-terminal reductase (R) domain of bet1 catalyzes the reductive release of the polyketide chain. Because bet1 lacks a designated enoylreductase (ER) domain, the required activity is provided the enoyl reductase bet3. The short-chain dehydrogenase/reductase bet4 then catalyzes reduction of dehydroprobetaenone I to probetaenone I. The cytochrome P450 monooxygenase bet2 catalyzes successive epoxidation, oxidation (resulting from epoxide opening) and hydroxylation to install a tertiary alcohol in the decaline ring to yield betaenone C from dehydroprobetaenone I and betaenone B from probetaenone I. The FAD-linked oxidoreductase (orf1) is probably responsible for the conversion of betaenone C to betaenone A via an intramolecular aldol reaction between C-1 and C-17 to form the bridged tricyclic system in betaenone A. The sequence is that of FAD-linked oxidoreductase orf1 from Neocamarosporium betae (Beet black rot fungus).